We begin with the raw amino-acid sequence, 72 residues long: Large ribosomal subunit protein bL28 (72 aa).

Belongs to the bacterial ribosomal protein bL28 family.

The sequence is that of Large ribosomal subunit protein bL28 from Chlorobium phaeobacteroides (strain DSM 266 / SMG 266 / 2430).